Here is an 82-residue protein sequence, read N- to C-terminus: Auxin-induced protein 15A (82 aa).

It belongs to the ARG7 family.

The sequence is that of Auxin-induced protein 15A from Glycine max (Soybean).